Consider the following 496-residue polypeptide: Glycerol kinase (496 aa).

Thr-12 is a binding site for ADP. ATP-binding residues include Thr-12, Thr-13, and Ser-14. Thr-12 provides a ligand contact to sn-glycerol 3-phosphate. Arg-16 is a binding site for ADP. 3 residues coordinate sn-glycerol 3-phosphate: Arg-82, Glu-83, and Tyr-134. Glycerol-binding residues include Arg-82, Glu-83, and Tyr-134. His-230 carries the phosphohistidine; by HPr modification. Asp-244 contributes to the sn-glycerol 3-phosphate binding site. Positions 244 and 245 each coordinate glycerol. The ADP site is built by Thr-266 and Gly-309. Thr-266, Gly-309, Gln-313, and Gly-410 together coordinate ATP. Positions 410 and 414 each coordinate ADP.

This sequence belongs to the FGGY kinase family. Homotetramer and homodimer (in equilibrium). The phosphoenolpyruvate-dependent sugar phosphotransferase system (PTS), including enzyme I, and histidine-containing protein (HPr) are required for the phosphorylation, which leads to the activation of the enzyme.

It carries out the reaction glycerol + ATP = sn-glycerol 3-phosphate + ADP + H(+). It participates in polyol metabolism; glycerol degradation via glycerol kinase pathway; sn-glycerol 3-phosphate from glycerol: step 1/1. With respect to regulation, activated by phosphorylation and inhibited by fructose 1,6-bisphosphate (FBP). In terms of biological role, key enzyme in the regulation of glycerol uptake and metabolism. Catalyzes the phosphorylation of glycerol to yield sn-glycerol 3-phosphate. This Bacillus mycoides (strain KBAB4) (Bacillus weihenstephanensis) protein is Glycerol kinase.